Here is a 714-residue protein sequence, read N- to C-terminus: Fatty acid oxidation complex subunit alpha (714 aa).

Residues 1–190 form an enoyl-CoA hydratase region; that stretch reads MEMASAFTLN…KLGLVDDVVP (190 aa). A 3-hydroxyacyl-CoA dehydrogenase region spans residues 306–714; it reads APLNSVGILG…FWKTTATDLQ (409 aa).

It in the N-terminal section; belongs to the enoyl-CoA hydratase/isomerase family. The protein in the central section; belongs to the 3-hydroxyacyl-CoA dehydrogenase family. Heterotetramer of two alpha chains (FadJ) and two beta chains (FadI).

It localises to the cytoplasm. The enzyme catalyses a (3S)-3-hydroxyacyl-CoA = a (2E)-enoyl-CoA + H2O. The catalysed reaction is a 4-saturated-(3S)-3-hydroxyacyl-CoA = a (3E)-enoyl-CoA + H2O. It catalyses the reaction a (3S)-3-hydroxyacyl-CoA + NAD(+) = a 3-oxoacyl-CoA + NADH + H(+). It carries out the reaction (3S)-3-hydroxybutanoyl-CoA = (3R)-3-hydroxybutanoyl-CoA. The protein operates within lipid metabolism; fatty acid beta-oxidation. Catalyzes the formation of a hydroxyacyl-CoA by addition of water on enoyl-CoA. Also exhibits 3-hydroxyacyl-CoA epimerase and 3-hydroxyacyl-CoA dehydrogenase activities. The polypeptide is Fatty acid oxidation complex subunit alpha (Escherichia coli O17:K52:H18 (strain UMN026 / ExPEC)).